The sequence spans 309 residues: Porphobilinogen deaminase (309 aa).

C241 carries the post-translational modification S-(dipyrrolylmethanemethyl)cysteine.

It belongs to the HMBS family. Monomer. The cofactor is dipyrromethane.

It catalyses the reaction 4 porphobilinogen + H2O = hydroxymethylbilane + 4 NH4(+). Its pathway is porphyrin-containing compound metabolism; protoporphyrin-IX biosynthesis; coproporphyrinogen-III from 5-aminolevulinate: step 2/4. Tetrapolymerization of the monopyrrole PBG into the hydroxymethylbilane pre-uroporphyrinogen in several discrete steps. The chain is Porphobilinogen deaminase from Bacillus cereus (strain AH187).